Reading from the N-terminus, the 551-residue chain is Arginine--tRNA ligase (551 aa).

The 'HIGH' region signature appears at 123 to 133; the sequence is ANPTGPLTIGR.

Belongs to the class-I aminoacyl-tRNA synthetase family. As to quaternary structure, monomer.

Its subcellular location is the cytoplasm. It carries out the reaction tRNA(Arg) + L-arginine + ATP = L-arginyl-tRNA(Arg) + AMP + diphosphate. The chain is Arginine--tRNA ligase from Chlorobaculum tepidum (strain ATCC 49652 / DSM 12025 / NBRC 103806 / TLS) (Chlorobium tepidum).